A 641-amino-acid polypeptide reads, in one-letter code: Vacuolar protein sorting-associated protein 52 (641 aa).

The stretch at 81 to 110 (LTEFTNRLSNYTQDLDFIKKKSNELQSLLE) forms a coiled coil. The residue at position 602 (Ser-602) is a Phosphoserine.

The protein belongs to the VPS52 family. In terms of assembly, component of the Golgi-associated retrograde protein (GARP) complex, also called VFT (VPS fifty-three) complex, composed of VPS51, VPS52, VPS53 and VPS54. Also interacts with TLG1 and YPT6.

The protein resides in the golgi apparatus. The protein localises to the trans-Golgi network membrane. It localises to the endosome membrane. It is found in the cytoplasm. Its subcellular location is the cytoskeleton. Its function is as follows. Involved in retrograde transport from early and late endosomes to late Golgi by linking the vesicle through the t-SNARE TGL1 to the Golgi, leading to the membrane fusion between late Golgi and endosomal vesicles. May also be involved in the actin cytoskeleton organization. The chain is Vacuolar protein sorting-associated protein 52 (VPS52) from Saccharomyces cerevisiae (strain ATCC 204508 / S288c) (Baker's yeast).